The following is a 533-amino-acid chain: tRNA(Ile)-lysidine synthase (533 aa).

27 to 32 (SGGSDS) is a binding site for ATP.

It belongs to the tRNA(Ile)-lysidine synthase family.

Its subcellular location is the cytoplasm. The catalysed reaction is cytidine(34) in tRNA(Ile2) + L-lysine + ATP = lysidine(34) in tRNA(Ile2) + AMP + diphosphate + H(+). In terms of biological role, ligates lysine onto the cytidine present at position 34 of the AUA codon-specific tRNA(Ile) that contains the anticodon CAU, in an ATP-dependent manner. Cytidine is converted to lysidine, thus changing the amino acid specificity of the tRNA from methionine to isoleucine. The polypeptide is tRNA(Ile)-lysidine synthase (Rickettsia peacockii (strain Rustic)).